We begin with the raw amino-acid sequence, 361 residues long: Phosphoserine aminotransferase (361 aa).

Arg-43 is a binding site for L-glutamate. Pyridoxal 5'-phosphate-binding positions include 77-78, Trp-103, Thr-153, Asp-173, and Gln-196; that span reads AS. Residue Lys-197 is modified to N6-(pyridoxal phosphate)lysine. 238–239 lines the pyridoxal 5'-phosphate pocket; the sequence is NT.

This sequence belongs to the class-V pyridoxal-phosphate-dependent aminotransferase family. SerC subfamily. In terms of assembly, homodimer. It depends on pyridoxal 5'-phosphate as a cofactor.

The protein localises to the cytoplasm. It catalyses the reaction O-phospho-L-serine + 2-oxoglutarate = 3-phosphooxypyruvate + L-glutamate. The enzyme catalyses 4-(phosphooxy)-L-threonine + 2-oxoglutarate = (R)-3-hydroxy-2-oxo-4-phosphooxybutanoate + L-glutamate. It participates in amino-acid biosynthesis; L-serine biosynthesis; L-serine from 3-phospho-D-glycerate: step 2/3. Its function is as follows. Catalyzes the reversible conversion of 3-phosphohydroxypyruvate to phosphoserine and of 3-hydroxy-2-oxo-4-phosphonooxybutanoate to phosphohydroxythreonine. This Alkalihalobacillus alcalophilus (Bacillus alcalophilus) protein is Phosphoserine aminotransferase (serC).